We begin with the raw amino-acid sequence, 226 residues long: Lipid phosphate phosphatase gamma (226 aa).

Methionine 1 is subject to N-acetylmethionine. 5 helical membrane-spanning segments follow: residues 24–44, 52–72, 102–122, 128–148, and 152–174; these read LGHF…GGFV, ELQG…NEFI, FMFF…GFWF, WIMN…RVYL, and TVAQ…FWVV.

This sequence belongs to the PA-phosphatase related phosphoesterase family. Expressed in root tips, root branch points, vascular tissue of cotyledons and leaves, pistil, anthers and filaments.

It is found in the plastid. The protein localises to the chloroplast inner membrane. Its activity is regulated as follows. Inhibited by Mg(2+). Its function is as follows. Exhibits phosphatidate phosphatase (PAP) activity in vitro. May play a primary role as PAP in plastids. This chain is Lipid phosphate phosphatase gamma (LPPG), found in Arabidopsis thaliana (Mouse-ear cress).